The following is a 213-amino-acid chain: ATP phosphoribosyltransferase (213 aa).

The protein belongs to the ATP phosphoribosyltransferase family. Short subfamily. In terms of assembly, heteromultimer composed of HisG and HisZ subunits.

The protein localises to the cytoplasm. It carries out the reaction 1-(5-phospho-beta-D-ribosyl)-ATP + diphosphate = 5-phospho-alpha-D-ribose 1-diphosphate + ATP. The protein operates within amino-acid biosynthesis; L-histidine biosynthesis; L-histidine from 5-phospho-alpha-D-ribose 1-diphosphate: step 1/9. Catalyzes the condensation of ATP and 5-phosphoribose 1-diphosphate to form N'-(5'-phosphoribosyl)-ATP (PR-ATP). Has a crucial role in the pathway because the rate of histidine biosynthesis seems to be controlled primarily by regulation of HisG enzymatic activity. The protein is ATP phosphoribosyltransferase of Variovorax paradoxus (strain S110).